A 968-amino-acid chain; its full sequence is RNA polymerase-associated protein RapA (968 aa).

A Helicase ATP-binding domain is found at 164 to 334 (EVGQRHAPRV…FARLRLLDPN (171 aa)). 177–184 (DEVGLGKT) contacts ATP. The short motif at 280–283 (DEAH) is the DEAH box element. A Helicase C-terminal domain is found at 493–644 (WLVDFLLDLR…TCPTGRALYD (152 aa)).

This sequence belongs to the SNF2/RAD54 helicase family. RapA subfamily. As to quaternary structure, interacts with the RNAP. Has a higher affinity for the core RNAP than for the holoenzyme. Its ATPase activity is stimulated by binding to RNAP.

In terms of biological role, transcription regulator that activates transcription by stimulating RNA polymerase (RNAP) recycling in case of stress conditions such as supercoiled DNA or high salt concentrations. Probably acts by releasing the RNAP, when it is trapped or immobilized on tightly supercoiled DNA. Does not activate transcription on linear DNA. Probably not involved in DNA repair. This is RNA polymerase-associated protein RapA from Sodalis glossinidius (strain morsitans).